The primary structure comprises 341 residues: L-threonine 3-dehydrogenase (341 aa).

Cysteine 38 provides a ligand contact to Zn(2+). Active-site charge relay system residues include threonine 40 and histidine 43. 6 residues coordinate Zn(2+): histidine 63, glutamate 64, cysteine 93, cysteine 96, cysteine 99, and cysteine 107. NAD(+) contacts are provided by residues isoleucine 175, aspartate 195, arginine 200, 262–264, and 286–287; these read LGI and IY.

Belongs to the zinc-containing alcohol dehydrogenase family. Homotetramer. The cofactor is Zn(2+).

The protein localises to the cytoplasm. The enzyme catalyses L-threonine + NAD(+) = (2S)-2-amino-3-oxobutanoate + NADH + H(+). It participates in amino-acid degradation; L-threonine degradation via oxydo-reductase pathway; glycine from L-threonine: step 1/2. Its function is as follows. Catalyzes the NAD(+)-dependent oxidation of L-threonine to 2-amino-3-ketobutyrate. The chain is L-threonine 3-dehydrogenase from Shewanella sp. (strain ANA-3).